A 561-amino-acid chain; its full sequence is Putative transport protein YbjL (561 aa).

5 consecutive transmembrane segments (helical) span residues 8–28 (LLNG…LCLG), 32–52 (LGSI…LLGQ), 66–86 (FMLF…SIFF), 94–114 (MLAL…GKLF), and 158–178 (NLSL…IVGA). RCK C-terminal domains follow at residues 200–288 (RGLD…SFRN) and 292–373 (VFDR…RIGF). 5 helical membrane-spanning segments follow: residues 383–403 (LLAF…TFQF), 406–426 (FSFG…LGFL), 447–467 (FGLM…ISNG), 475–495 (MLIA…LFGA), and 540–560 (AIAN…WPGL).

This sequence belongs to the AAE transporter (TC 2.A.81) family. YbjL subfamily.

Its subcellular location is the cell membrane. The protein is Putative transport protein YbjL of Salmonella arizonae (strain ATCC BAA-731 / CDC346-86 / RSK2980).